The chain runs to 274 residues: Glutamate racemase (274 aa).

Substrate is bound by residues 9-10 and 41-42; these read DS and YG. Cys73 serves as the catalytic Proton donor/acceptor. 74–75 is a substrate binding site; that stretch reads NT. Cys183 functions as the Proton donor/acceptor in the catalytic mechanism. 184–185 contacts substrate; the sequence is TH.

Belongs to the aspartate/glutamate racemases family.

The enzyme catalyses L-glutamate = D-glutamate. It functions in the pathway cell wall biogenesis; peptidoglycan biosynthesis. Provides the (R)-glutamate required for cell wall biosynthesis. The chain is Glutamate racemase from Shewanella baltica (strain OS185).